A 103-amino-acid chain; its full sequence is Co-chaperonin GroES (103 aa).

Belongs to the GroES chaperonin family. In terms of assembly, heptamer of 7 subunits arranged in a ring. Interacts with the chaperonin GroEL.

The protein localises to the cytoplasm. In terms of biological role, together with the chaperonin GroEL, plays an essential role in assisting protein folding. The GroEL-GroES system forms a nano-cage that allows encapsulation of the non-native substrate proteins and provides a physical environment optimized to promote and accelerate protein folding. GroES binds to the apical surface of the GroEL ring, thereby capping the opening of the GroEL channel. This Synechococcus sp. (strain CC9902) protein is Co-chaperonin GroES.